Here is a 149-residue protein sequence, read N- to C-terminus: NPC intracellular cholesterol transporter 2 (149 aa).

Positions 1–19 are cleaved as a signal peptide; that stretch reads MHFLAAAFLLLTLSASALA. Intrachain disulfides connect Cys27–Cys140, Cys42–Cys47, and Cys93–Cys99. N-linked (GlcNAc...) asparagine glycosylation is present at Asn58. Lys116 bears the N6-acetyllysine mark.

It belongs to the NPC2 family. In terms of assembly, interacts with NPC1 (via the second lumenal domain) in a cholestrol-dependent manner. Interacts with NUS1/NgBR, the interaction stabilizes NCP2 and regulates cholesterol trafficking. Interacts with DHDDS. Interacts with NEDD4L (via C2 domain). Interacts with NPC1L1. In terms of processing, N-glycosylated. Found in the epididymal fluid as a 19 kDa glycoprotein that is processed during its passage through the epididymis into a 16 kDa protein. As to expression, found in the fluid from the distal caput to cauda epididymis, not detected in the rete testis and the proximal and middle caput epididymal fluids (at protein level).

It is found in the secreted. Its subcellular location is the endoplasmic reticulum. It localises to the lysosome. The enzyme catalyses cholesterol(in) = cholesterol(out). Functionally, intracellular cholesterol transporter which acts in concert with NPC1 and plays an important role in the egress of cholesterol from the lysosomal compartment. Unesterified cholesterol that has been released from LDLs in the lumen of the late endosomes/lysosomes is transferred by NPC2 to the cholesterol-binding pocket in the N-terminal domain of NPC1. May bind and mobilize cholesterol that is associated with membranes. NPC2 binds cholesterol with a 1:1 stoichiometry. Can bind a variety of sterols, including lathosterol, desmosterol and the plant sterols stigmasterol and beta-sitosterol. The secreted form of NCP2 regulates biliary cholesterol secretion via stimulation of ABCG5/ABCG8-mediated cholesterol transport. The sequence is that of NPC intracellular cholesterol transporter 2 from Sus scrofa (Pig).